The sequence spans 129 residues: Small ribosomal subunit protein bS6 (129 aa).

Residues 110–121 show a composition bias toward basic and acidic residues; that stretch reads FVRRDDERREDT. A disordered region spans residues 110–129; it reads FVRRDDERREDTVEAASSEE.

The protein belongs to the bacterial ribosomal protein bS6 family.

Its function is as follows. Binds together with bS18 to 16S ribosomal RNA. The protein is Small ribosomal subunit protein bS6 of Aeromonas salmonicida (strain A449).